Reading from the N-terminus, the 720-residue chain is DNA replication licensing factor mcm7-B (720 aa).

The segment at 183–210 (CDQCGAETYQPIQSPTFMPLIMCPSREC) adopts a C4-type zinc-finger fold. One can recognise an MCM domain in the interval 331-537 (FYEKLAASIA…NDLRLAQHIT (207 aa)). Tyrosine 344, glycine 383, alanine 385, lysine 386, serine 387, asparagine 488, arginine 513, and arginine 603 together coordinate ATP. The short motif at 512-515 (SRFD) is the Arginine finger element.

Belongs to the MCM family. Component of the mcm2-7 complex (RLF-M). The complex forms a toroidal hexameric ring with the proposed subunit order mcm2-mcm6-mcm4-mcm7-mcm3-mcm5. The heterodimer of mmcm3/mcm5 interacts with mcm4, mmcm6, mcm7 and weakly with mcm2. The N-terminus is required for interaction with mmcm3, though this interaction may not be direct, and remains in a complex with mmcm3 throughout the cell cycle. Begins to associate with zmcm6 at the neurula stage. Component of the replisome complex. Component of the CMG helicase complex, composed of the mcm2-7 complex, the GINS complex and cdc45. In terms of processing, ubiquitinated by traip when forks converge following formation of DNA interstrand cross-links. Short ubiquitin chains on mcm7 promote recruitment of DNA glycosylase neil3. If the interstrand cross-link cannot be cleaved by neil3, the ubiquitin chains continue to grow on mcm7, promoting the unloading of the CMG helicase complex by the vcp/p97 ATPase.

It localises to the nucleus. The protein localises to the chromosome. The catalysed reaction is ATP + H2O = ADP + phosphate + H(+). Functionally, acts as a component of the mcm2-7 complex (mcm complex) which is the putative replicative helicase essential for 'once per cell cycle' DNA replication initiation and elongation in eukaryotic cells. The active ATPase sites in the mcm2-7 ring are formed through the interaction surfaces of two neighboring subunits such that a critical structure of a conserved arginine finger motif is provided in trans relative to the ATP-binding site of the Walker A box of the adjacent subunit. The six ATPase active sites, however, are likely to contribute differentially to the complex helicase activity. The existence of maternal and zygotic forms of mcm3 and mcm6 suggests that specific forms of mcm2-7 complexes may be used during different stages of development. The sequence is that of DNA replication licensing factor mcm7-B (mcm7-b) from Xenopus laevis (African clawed frog).